We begin with the raw amino-acid sequence, 195 residues long: Interferon omega-1 (195 aa).

A signal peptide spans 1–23 (MAFVLSLLMALVLVSYGPGGSLG). Intrachain disulfides connect Cys24-Cys122 and Cys52-Cys162.

The protein belongs to the alpha/beta interferon family.

It localises to the secreted. The sequence is that of Interferon omega-1 (IFNW1) from Bos taurus (Bovine).